Consider the following 107-residue polypeptide: Large ribosomal subunit protein uL24 (107 aa).

Belongs to the universal ribosomal protein uL24 family. Part of the 50S ribosomal subunit.

In terms of biological role, one of two assembly initiator proteins, it binds directly to the 5'-end of the 23S rRNA, where it nucleates assembly of the 50S subunit. Functionally, one of the proteins that surrounds the polypeptide exit tunnel on the outside of the subunit. The protein is Large ribosomal subunit protein uL24 of Fervidobacterium nodosum (strain ATCC 35602 / DSM 5306 / Rt17-B1).